Consider the following 296-residue polypeptide: Small ribosomal subunit biogenesis GTPase RsgA (296 aa).

In terms of domain architecture, CP-type G spans 63–224 (RNQLVRPPVA…IADTPGFSSY (162 aa)). Residues 112–115 (SKTD) and 167–175 (GQTGAGKST) contribute to the GTP site. 4 residues coordinate Zn(2+): Cys-248, Cys-253, His-255, and Cys-261.

Belongs to the TRAFAC class YlqF/YawG GTPase family. RsgA subfamily. Monomer. Associates with 30S ribosomal subunit, binds 16S rRNA. Requires Zn(2+) as cofactor.

It localises to the cytoplasm. In terms of biological role, one of several proteins that assist in the late maturation steps of the functional core of the 30S ribosomal subunit. Helps release RbfA from mature subunits. May play a role in the assembly of ribosomal proteins into the subunit. Circularly permuted GTPase that catalyzes slow GTP hydrolysis, GTPase activity is stimulated by the 30S ribosomal subunit. The protein is Small ribosomal subunit biogenesis GTPase RsgA of Limosilactobacillus reuteri (strain DSM 20016) (Lactobacillus reuteri).